A 119-amino-acid chain; its full sequence is Large ribosomal subunit protein bL20 (119 aa).

Belongs to the bacterial ribosomal protein bL20 family.

Its function is as follows. Binds directly to 23S ribosomal RNA and is necessary for the in vitro assembly process of the 50S ribosomal subunit. It is not involved in the protein synthesizing functions of that subunit. The chain is Large ribosomal subunit protein bL20 from Dehalococcoides mccartyi (strain ATCC BAA-2100 / JCM 16839 / KCTC 5957 / BAV1).